The sequence spans 371 residues: DNA primase DnaG (371 aa).

Residues 173–248 (DEIILVEGRA…DIDYVAVAPP (76 aa)) enclose the Toprim domain. The Mg(2+) site is built by Glu-179, Asp-221, and Asp-223.

The protein belongs to the archaeal DnaG primase family. In terms of assembly, forms a ternary complex with MCM helicase and DNA. Component of the archaeal exosome complex. Requires Mg(2+) as cofactor.

The enzyme catalyses ssDNA + n NTP = ssDNA/pppN(pN)n-1 hybrid + (n-1) diphosphate.. Its function is as follows. RNA polymerase that catalyzes the synthesis of short RNA molecules used as primers for DNA polymerase during DNA replication. Also part of the exosome, which is a complex involved in RNA degradation. Acts as a poly(A)-binding protein that enhances the interaction between heteromeric, adenine-rich transcripts and the exosome. The polypeptide is DNA primase DnaG (Nanoarchaeum equitans (strain Kin4-M)).